The primary structure comprises 267 residues: Stomatin-3 (267 aa).

Residues 17 to 37 form a helical membrane-spanning segment; the sequence is FVALICAWAFLLLTFPVSIFF.

The protein belongs to the band 7/mec-2 family.

The protein resides in the membrane. The chain is Stomatin-3 (sto-3) from Caenorhabditis elegans.